Reading from the N-terminus, the 317-residue chain is Tenomodulin (317 aa).

Residues 1 to 30 (MAKNPPENCEGCHILNAEALKSKKICKSLK) are Cytoplasmic-facing. Residues 31 to 50 (ICGLVFGILALTLIVLFWGS) traverse the membrane as a helical; Signal-anchor for type II membrane protein segment. At 51–317 (KHFWPEVSKK…WWVARMLGRV (267 aa)) the chain is on the extracellular side. Residues 93–186 (GNGTDETLEV…ICDNVTMYWI (94 aa)) enclose the BRICHOS domain. N94 is a glycosylation site (N-linked (GlcNAc...) asparagine). A disulfide bridge links C120 with C178. The N-linked (GlcNAc...) asparagine glycan is linked to N180. S239 carries the post-translational modification Phosphoserine.

Belongs to the chondromodulin-1 family. In terms of tissue distribution, widely expressed with highest expression in tendons and ligaments, in the diaphragm, eye and skeletal muscle. Expressed in neuronal cells of all brain regions. Very low expression, if any, in glial cells.

It localises to the membrane. Its subcellular location is the nucleus envelope. May be an angiogenesis inhibitor. This chain is Tenomodulin (Tnmd), found in Mus musculus (Mouse).